Reading from the N-terminus, the 138-residue chain is Ribulose bisphosphate carboxylase small subunit (138 aa).

This sequence belongs to the RuBisCO small chain family. Heterohexadecamer of 8 large and 8 small subunits.

Its subcellular location is the plastid. The protein localises to the chloroplast. RuBisCO catalyzes two reactions: the carboxylation of D-ribulose 1,5-bisphosphate, the primary event in carbon dioxide fixation, as well as the oxidative fragmentation of the pentose substrate in the photorespiration process. Both reactions occur simultaneously and in competition at the same active site. Although the small subunit is not catalytic it is essential for maximal activity. The sequence is that of Ribulose bisphosphate carboxylase small subunit from Cyanidioschyzon merolae (strain NIES-3377 / 10D) (Unicellular red alga).